A 349-amino-acid chain; its full sequence is ATPase GET3 (349 aa).

Position 26–33 (26–33) interacts with ATP; the sequence is KGGVGKTT. Asp57 is an active-site residue. ATP contacts are provided by Glu240 and Asn267. Positions 280 and 283 each coordinate Zn(2+).

This sequence belongs to the arsA ATPase family. Homodimer. Component of the Golgi to ER traffic (GET) complex, which is composed of GET1, GET2 and GET3. Within the complex, GET1 and GET2 form a heterotetramer which is stabilized by phosphatidylinositol binding and which binds to the GET3 homodimer. Interacts with the chloride channel protein GEF1.

It localises to the cytoplasm. The protein resides in the endoplasmic reticulum. Its subcellular location is the golgi apparatus. Its function is as follows. ATPase required for the post-translational delivery of tail-anchored (TA) proteins to the endoplasmic reticulum. Recognizes and selectively binds the transmembrane domain of TA proteins in the cytosol. This complex then targets to the endoplasmic reticulum by membrane-bound receptors GET1 and GET2, where the tail-anchored protein is released for insertion. This process is regulated by ATP binding and hydrolysis. ATP binding drives the homodimer towards the closed dimer state, facilitating recognition of newly synthesized TA membrane proteins. ATP hydrolysis is required for insertion. Subsequently, the homodimer reverts towards the open dimer state, lowering its affinity for the GET1-GET2 receptor, and returning it to the cytosol to initiate a new round of targeting. Cooperates with the HDEL receptor ERD2 to mediate the ATP-dependent retrieval of resident ER proteins that contain a C-terminal H-D-E-L retention signal from the Golgi to the ER. Involved in low-level resistance to the oxyanions arsenite and arsenate, and in heat tolerance. This chain is ATPase GET3, found in Lachancea thermotolerans (strain ATCC 56472 / CBS 6340 / NRRL Y-8284) (Yeast).